A 409-amino-acid chain; its full sequence is Elongation factor Tu (409 aa).

The tr-type G domain maps to 10 to 214; sequence KPHVNIGTIG…EVDAYIPEPE (205 aa). The tract at residues 19 to 26 is G1; it reads GHVDHGKT. 19–26 lines the GTP pocket; the sequence is GHVDHGKT. Thr26 contributes to the Mg(2+) binding site. The interval 60–64 is G2; it reads GITIN. The interval 81-84 is G3; that stretch reads DCPG. GTP is bound by residues 81–85 and 136–139; these read DCPGH and NKQD. A G4 region spans residues 136-139; the sequence is NKQD. Residues 174-176 form a G5 region; that stretch reads SAL.

This sequence belongs to the TRAFAC class translation factor GTPase superfamily. Classic translation factor GTPase family. EF-Tu/EF-1A subfamily. Monomer.

The protein localises to the cytoplasm. The enzyme catalyses GTP + H2O = GDP + phosphate + H(+). In terms of biological role, GTP hydrolase that promotes the GTP-dependent binding of aminoacyl-tRNA to the A-site of ribosomes during protein biosynthesis. The sequence is that of Elongation factor Tu from Rippkaea orientalis (strain PCC 8801 / RF-1) (Cyanothece sp. (strain PCC 8801)).